The primary structure comprises 22 residues: NDMA-dependent alcohol dehydrogenase (22 aa).

Belongs to the zinc-containing alcohol dehydrogenase family. As to quaternary structure, homotetramer. The cofactor is NADH.

Its subcellular location is the cytoplasm. It catalyses the reaction N,N-dimethyl-4-nitrosoaniline + a primary alcohol = 4-(hydroxylamino)-N,N-dimethylaniline + an aldehyde. It carries out the reaction ethanol + A = acetaldehyde + AH2. Functionally, this is a novel enzyme, catalytically different from common alcohol dehydrogenases. It is effective in oxidizing ethanol, other primary alcohols and benzylalcohol only in the presence of p-nitroso-N,N-dimethylaniline (NDMA) as an electron acceptor. NADH acts as a cofactor here instead of as a coenzyme. The chain is NDMA-dependent alcohol dehydrogenase from Rhodococcus erythropolis (Arthrobacter picolinophilus).